A 245-amino-acid polypeptide reads, in one-letter code: MSGHSKWHNIQAKKGKMDAKRGKIFTKIGKEIAVAVKEGGANLDGNSRLKDAVAKAKAANMPNDNIQRAIKKAAGEGDSVNYESIVYEGYGPSGVAVMVEVLTDNKNRSAGNVRSAFTKGGGNMGTSGCVGFMFQKKGEIVIEKAELDEDEIMMMALDAGAEDFASEEEVFIVTTSPEDFGTVREALEAEGLEFLEAAVKMIPDTETAINEDDAKKFQKMLDLLEDDDDVQEVYHNAEFPEGWDE.

Belongs to the TACO1 family.

It is found in the cytoplasm. The polypeptide is Probable transcriptional regulatory protein CPR_1922 (Clostridium perfringens (strain SM101 / Type A)).